A 988-amino-acid polypeptide reads, in one-letter code: Transcription regulator srbA precursor (988 aa).

Residues 1–427 (MSTPGIGGDF…SSWHARAISH (427 aa)) lie on the Cytoplasmic side of the membrane. Disordered regions lie at residues 53 to 85 (AFPETANASPSSPFDLAFISPSASSGREASDAM) and 108 to 169 (GDLN…KKRA). Low complexity predominate over residues 125–136 (SLSVHSNSPLSS). A basic motif region spans residues 165 to 178 (SKKRAHNVIEKRYR). One can recognise a bHLH domain in the interval 165–236 (SKKRAHNVIE…SKATEYIRHL (72 aa)). Positions 179-236 (ANLNEKIAELRDSVPSLRASYKQANGNSGDDDDDGVTSASKLNKASILSKATEYIRHL) are helix-loop-helix motif. Residues 226–260 (LSKATEYIRHLEIRNKRLEEENTALKIRLRQLDKA) adopt a coiled-coil conformation. Residues 267–291 (SAASVSSPSDCTVSTESGASSSPSV) are compositionally biased toward polar residues. Positions 267 to 313 (SAASVSSPSDCTVSTESGASSSPSVFSHAEDVPSDHSPTSSHPPEGL) are disordered. Over residues 301 to 310 (DHSPTSSHPP) the composition is skewed to low complexity. Residues 428 to 447 (FLMLAILVVGSAFIVFVYLF) form a helical membrane-spanning segment. Topologically, residues 448 to 988 (NSDPRRQYSA…SDNLLLSDES (541 aa)) are lumenal. Over residues 866-881 (PPSPMSKASDMLSSSS) the composition is skewed to low complexity. The segment at 866-900 (PPSPMSKASDMLSSSSDDGEDGASQRNNNIIPHPM) is disordered.

In terms of processing, in low oxygen or sterol conditions, undergoes proteolytic cleavage by rhomboid-type protease rbdB and is released as soluble transcription factor from the membrane.

Its subcellular location is the endoplasmic reticulum membrane. It is found in the nucleus. Its function is as follows. Precursor of the transcription factor srbA, which is embedded in the endoplasmic reticulum membrane. Low oxygen or sterol conditions promote processing of this form, releasing the transcription factor form that translocates into the nucleus and activates transcription of genes required for adaptation to anaerobic growth. Functionally, transcription factor that regulates sterol biosynthesis and hyphal morphology. Plays a critical role in ergosterol biosynthesis, resistance to the azole class of antifungal drugs, and in maintenance of cell polarity. Directly binds erg11A/cyp51A upstream DNA sequence at tandem repeats, called TR34 and TR46, that produce duplicated binding sites. Also mediates regulation of iron acquisition in response to hypoxia and low iron conditions via activation of extra- and intracellular siderophore production. Positively regulates the expression of the other hypoxia adaptation key transcription factor srbB. Required for the azole-sensing and response to azole stress. Binds the high-affinity sites 5'-A-T-C-G/A-T/G-A/G-C/T-G/C-A-T-3' of target promoters. Required for virulence in murine models of invasive pulmonary aspergillosis (IPA). The chain is Transcription regulator srbA precursor from Aspergillus fumigatus (strain ATCC MYA-4609 / CBS 101355 / FGSC A1100 / Af293) (Neosartorya fumigata).